Here is a 300-residue protein sequence, read N- to C-terminus: Zinc finger protein 705B (300 aa).

Residues 7–78 (VTFEDVAIDF…GRVFLQDQNP (72 aa)) enclose the KRAB domain. 3 C2H2-type zinc fingers span residues 172–194 (YQCNLCEKAYTNCFYLRRHKMTH), 200–222 (YACHLCGKAFTQCSHLRRHEKTH), and 228–250 (YKCHQCGKAFIQSFNLRRHERTH). Residues 256-278 (YECDKSGKAFSQSSGFRGNKIIH) form a C2H2-type 4; degenerate zinc finger.

Belongs to the krueppel C2H2-type zinc-finger protein family.

The protein localises to the nucleus. May be involved in transcriptional regulation. The polypeptide is Zinc finger protein 705B (ZNF705B) (Homo sapiens (Human)).